The sequence spans 809 residues: TPR repeat-containing protein TP_0920 (809 aa).

Residues Pro-103–Ser-125 form a disordered region. TPR repeat units follow at residues Leu-315–Cys-348, Ala-383–Gln-416, Leu-418–Gln-450, Thr-471–Asp-504, Leu-513–Cys-550, Leu-552–Asn-582, Gly-583–Glu-616, Gly-656–Asn-689, and Ala-723–Cys-756.

The chain is TPR repeat-containing protein TP_0920 from Treponema pallidum (strain Nichols).